Consider the following 179-residue polypeptide: Transcription factor 21 (179 aa).

Residues C20–R87 form a disordered region. A compositionally biased stretch (low complexity) spans T33–N46. Residues S70–Q80 are compositionally biased toward polar residues. The 53-residue stretch at V79–L131 folds into the bHLH domain.

As to quaternary structure, efficient DNA binding requires dimerization with another bHLH protein. Forms a heterodimer with TCF3 and binds the E box (5'-CANNTG-3').

It localises to the nucleus. In terms of biological role, involved in epithelial-mesenchymal interactions in kidney and lung morphogenesis that include epithelial differentiation and branching morphogenesis. May play a role in the specification or differentiation of one or more subsets of epicardial cell types. In Homo sapiens (Human), this protein is Transcription factor 21 (TCF21).